We begin with the raw amino-acid sequence, 324 residues long: Myoblast determination protein 1 homolog (324 aa).

Positions 125-146 are disordered; that stretch reads VDSQHEDTTTSTAGGAGVGGPR. The bHLH domain occupies 155–206; that stretch reads DRRKAATMRERRRLRKVNEAFEVVKQRTCPNPNQRLPKVEILRSAIDYINNL. A disordered region spans residues 251 to 272; it reads YNPENMFDDDDLTDSDDDRDHH. Over residues 256–267 the composition is skewed to acidic residues; sequence MFDDDDLTDSDD.

As to quaternary structure, efficient DNA binding requires dimerization with another bHLH protein. Body wall muscle cells; in clonal muscle precursors, in a set of early embryonic blastomeres (the ms-granddaughters), and in six glial-like cells called GLRS.

It localises to the nucleus. In terms of biological role, involved in myogenesis, in cooperation with transcription factors unc-120 and hnd-1. Acts redundantly with fozi-1 to promote body wall muscle cell and coelomocyte specification in postembryonic mesoderm progenitors, probably through suppression of sem-2. In Caenorhabditis elegans, this protein is Myoblast determination protein 1 homolog.